Consider the following 247-residue polypeptide: Probable transcriptional regulatory protein SynWH7803_1972 (247 aa).

This sequence belongs to the TACO1 family.

It is found in the cytoplasm. This is Probable transcriptional regulatory protein SynWH7803_1972 from Synechococcus sp. (strain WH7803).